Consider the following 591-residue polypeptide: Serine/threonine-protein kinase Nek2 (591 aa).

Residues 4–258 enclose the Protein kinase domain; sequence YEVLEQIGKG…AAQLLKHPQL (255 aa). Residues 10–18 and Lys33 each bind ATP; that span reads IGKGAFGSA. The active-site Proton acceptor is Asp129. 3 disordered regions span residues 309–331, 387–408, and 500–534; these read LGNE…SSTR, EPPK…TTPN, and RTDG…DTSS. Polar residues-rich tracts occupy residues 391 to 408 and 504 to 534; these read TSYN…TTPN and DNGS…DTSS.

The protein belongs to the protein kinase superfamily. NEK Ser/Thr protein kinase family. NIMA subfamily.

The catalysed reaction is L-seryl-[protein] + ATP = O-phospho-L-seryl-[protein] + ADP + H(+). It carries out the reaction L-threonyl-[protein] + ATP = O-phospho-L-threonyl-[protein] + ADP + H(+). Functionally, may be involved in plant development processes. In Oryza sativa subsp. indica (Rice), this protein is Serine/threonine-protein kinase Nek2 (NEK2).